We begin with the raw amino-acid sequence, 326 residues long: Polycomb complex protein BMI-1 (326 aa).

The RING-type zinc finger occupies 18–57 (CVLCGGYFIDATTIIECLHSFCKTCIVRYLETSKYCPICD). The short motif at 81–95 (KLVPGLFKNEMKRRR) is the Nuclear localization signal element. An interaction with PHC2 region spans residues 162–182 (RYLRCPAAMTVMHLRKFLRSK). Residues 164-228 (LRCPAAMTVM…GPLPLKYRVR (65 aa)) are interaction with E4F1. Residues 236 to 326 (ISHQRDGLTN…VNGSSATSSG (91 aa)) are disordered. 3 stretches are compositionally biased toward low complexity: residues 266-278 (PSTS…PSTP), 290-303 (SSTM…PSGN), and 315-326 (SSVNGSSATSSG).

As to quaternary structure, component of a PRC1-like complex. Identified in a PRC1-like HPRC-H complex with CBX2, CBX4, CBX8, PHC1, PHC2, PHC3 RING1 and RNF2. Interacts with RNF2/RING2. Interacts with RING1. Part of a complex that contains RNF2, UB2D3 and BMI1, where RNF2 and BMI1 form a tight heterodimer, and UB2D3 interacts only with RNF2. The complex composed of RNF2, UB2D3 and BMI1 binds nucleosomes, and has activity only with nucleosomal histone H2A. Interacts with CBX7 and CBX8. Interacts with SPOP. Part of a complex consisting of BMI1, CUL3 and SPOP. Interacts with E4F1. Interacts with PHC2. Interacts with zinc finger protein ZNF277. May be part of a complex including at least ZNF277, BMI1 and RNF2/RING2. May be polyubiquitinated; which does not lead to proteasomal degradation. Monoubiquitinated.

It is found in the nucleus. The protein localises to the cytoplasm. Component of a Polycomb group (PcG) multiprotein PRC1-like complex, a complex class required to maintain the transcriptionally repressive state of many genes, including Hox genes, throughout development. PcG PRC1 complex acts via chromatin remodeling and modification of histones; it mediates monoubiquitination of histone H2A 'Lys-119', rendering chromatin heritably changed in its expressibility. The complex composed of RNF2, UB2D3 and BMI1 binds nucleosomes, and has activity only with nucleosomal histone H2A. In the PRC1-like complex, regulates the E3 ubiquitin-protein ligase activity of RNF2/RING2. The chain is Polycomb complex protein BMI-1 (BMI1) from Bos taurus (Bovine).